Reading from the N-terminus, the 74-residue chain is uncharacterized protein (74 aa).

To U.parvum UU416.

This is an uncharacterized protein from Mycoplasma pneumoniae (strain ATCC 29342 / M129 / Subtype 1) (Mycoplasmoides pneumoniae).